The primary structure comprises 611 residues: UvrABC system protein C (611 aa).

One can recognise a GIY-YIG domain in the interval 6-84 (NNPGVYRMFN…IKRSRPRFNV (79 aa)). Residues 194–229 (QSVKDHLAAAMQAASADLDFEHAAVYRDRLAALSHV) enclose the UVR domain.

This sequence belongs to the UvrC family. Interacts with UvrB in an incision complex.

It localises to the cytoplasm. Functionally, the UvrABC repair system catalyzes the recognition and processing of DNA lesions. UvrC both incises the 5' and 3' sides of the lesion. The N-terminal half is responsible for the 3' incision and the C-terminal half is responsible for the 5' incision. The chain is UvrABC system protein C from Brucella suis biovar 1 (strain 1330).